We begin with the raw amino-acid sequence, 121 residues long: Small ribosomal subunit protein uS13 (121 aa).

A disordered region spans residues 97–121 (VRGQRTRTNARTRRGARKTVAGKKK). A compositionally biased stretch (basic residues) spans 100–121 (QRTRTNARTRRGARKTVAGKKK).

Belongs to the universal ribosomal protein uS13 family. Part of the 30S ribosomal subunit. Forms a loose heterodimer with protein S19. Forms two bridges to the 50S subunit in the 70S ribosome.

In terms of biological role, located at the top of the head of the 30S subunit, it contacts several helices of the 16S rRNA. In the 70S ribosome it contacts the 23S rRNA (bridge B1a) and protein L5 of the 50S subunit (bridge B1b), connecting the 2 subunits; these bridges are implicated in subunit movement. Contacts the tRNAs in the A and P-sites. The sequence is that of Small ribosomal subunit protein uS13 from Synechococcus sp. (strain CC9902).